Reading from the N-terminus, the 208-residue chain is V-type ATP synthase subunit E (208 aa).

It belongs to the V-ATPase E subunit family.

Produces ATP from ADP in the presence of a proton gradient across the membrane. The sequence is that of V-type ATP synthase subunit E (atpE) from Chlamydia muridarum (strain MoPn / Nigg).